The sequence spans 487 residues: Glutamyl-tRNA(Gln) amidotransferase subunit A (487 aa).

Catalysis depends on charge relay system residues Lys77 and Ser152. Ser176 (acyl-ester intermediate) is an active-site residue.

Belongs to the amidase family. GatA subfamily. Heterotrimer of A, B and C subunits.

The enzyme catalyses L-glutamyl-tRNA(Gln) + L-glutamine + ATP + H2O = L-glutaminyl-tRNA(Gln) + L-glutamate + ADP + phosphate + H(+). Its function is as follows. Allows the formation of correctly charged Gln-tRNA(Gln) through the transamidation of misacylated Glu-tRNA(Gln) in organisms which lack glutaminyl-tRNA synthetase. The reaction takes place in the presence of glutamine and ATP through an activated gamma-phospho-Glu-tRNA(Gln). This chain is Glutamyl-tRNA(Gln) amidotransferase subunit A, found in Ligilactobacillus salivarius (strain UCC118) (Lactobacillus salivarius).